A 158-amino-acid polypeptide reads, in one-letter code: FUN14 domain-containing protein 1 (158 aa).

The short motif at 21 to 24 (YEVV) is the YXXL element. Transmembrane regions (helical) follow at residues 51–70 (YSVTTQLVMGGLTGWCAGYL) and 77–98 (IAATAVGGGFLLLQIANHSGYV).

It belongs to the FUN14 family.

Its subcellular location is the mitochondrion outer membrane. Its function is as follows. Acts as an activator of hypoxia-induced mitophagy, an important mechanism for mitochondrial quality control. The sequence is that of FUN14 domain-containing protein 1 (fundc1) from Tetraodon nigroviridis (Spotted green pufferfish).